A 538-amino-acid polypeptide reads, in one-letter code: Bifunctional purine biosynthesis protein PurH (538 aa).

The 153-residue stretch at 6-158 (KHIPAPDLHR…KNHAYVATVV (153 aa)) folds into the MGS-like domain.

This sequence belongs to the PurH family.

It carries out the reaction (6R)-10-formyltetrahydrofolate + 5-amino-1-(5-phospho-beta-D-ribosyl)imidazole-4-carboxamide = 5-formamido-1-(5-phospho-D-ribosyl)imidazole-4-carboxamide + (6S)-5,6,7,8-tetrahydrofolate. The enzyme catalyses IMP + H2O = 5-formamido-1-(5-phospho-D-ribosyl)imidazole-4-carboxamide. It participates in purine metabolism; IMP biosynthesis via de novo pathway; 5-formamido-1-(5-phospho-D-ribosyl)imidazole-4-carboxamide from 5-amino-1-(5-phospho-D-ribosyl)imidazole-4-carboxamide (10-formyl THF route): step 1/1. The protein operates within purine metabolism; IMP biosynthesis via de novo pathway; IMP from 5-formamido-1-(5-phospho-D-ribosyl)imidazole-4-carboxamide: step 1/1. The sequence is that of Bifunctional purine biosynthesis protein PurH from Brucella anthropi (strain ATCC 49188 / DSM 6882 / CCUG 24695 / JCM 21032 / LMG 3331 / NBRC 15819 / NCTC 12168 / Alc 37) (Ochrobactrum anthropi).